Consider the following 964-residue polypeptide: MSHGTSLDELFNSRDFIGRHIGPNADQTRAMLDAMGLDSIDQLIDLTVPASIRGEETRALAAPVNEQQALAELKNIAGNNQRFKSYIGMGYHPTYVPPVILRNVLENPGWYTAYTPYQPEIAQGRLEGLLNFQQMIIELTGMDMANASMLDEATAAAEAMAMAKRVARKNKSNTFFADKHCHPQTLAVLQTRASHFGFELVIGDITQDLNKQEVFGAITQYPGTSGEVKDLRPIVNQAHEQDALLIVAADILSLVLLESPGAMGADIVVGSNQRFGIPMGFGGPHAAFFGFREKYKRATPGRIIGVSVDTRGKRALRMAMQTREQHIRREKANSNICTSQVLLAVMSVFYAMYHGSAGVTRIAQRVHTLTKMLAQGLTAQGHKLAFDNYFDTLCVIVNDQQQGLFDRAQQAGVNLRKLDKNALTISLNECTSLEDIHQLLDIFSLGKHSQDVKSLETKALAAEVIPASCRREGPALNHPVFEQYHSETEMLRYLKRLESKDIALNHAMIPLGSCTMKLNATAEMIPVTWPEFGELHPFAPMEQAAGYSTLFTQLQDMLKACTGYDAISLQPNAGSQGEYAGLVAIRKYFEHLGQTERNICLIPASAHGTNPASAQMVEMKVVVVACDNLGNVDLNDLKAKVAQYGETIAALMVTYPSTHGVFEEEITAICDLIHSVGAQVYIDGANMNALVGLAAPGKFGGDVSHLNLHKTFCIPHGGGGPGMGPIGVKSHLAPFLAGHPVQPVPNTLVENGTISAAPWGSASILTISWMYIRMMGAEGMKRATEFAILNANYIAHRLQDHYPILYKGKNGYIAHECLLDLRPLKESSGITEEDIAKRLMDFGFHAPTMSFPVAGTLMIEPTESESQAELDRFCDAMIKIRQEASLVESGELPRDNNPLVNAPHTLDDALDETWTRPYTRDEATRPLPYLHAHKIWPTVNRIDNVYGDRNLICSCPSIESYTEE.

K710 bears the N6-(pyridoxal phosphate)lysine mark.

The protein belongs to the GcvP family. As to quaternary structure, the glycine cleavage system is composed of four proteins: P, T, L and H. Pyridoxal 5'-phosphate serves as cofactor.

It catalyses the reaction N(6)-[(R)-lipoyl]-L-lysyl-[glycine-cleavage complex H protein] + glycine + H(+) = N(6)-[(R)-S(8)-aminomethyldihydrolipoyl]-L-lysyl-[glycine-cleavage complex H protein] + CO2. The glycine cleavage system catalyzes the degradation of glycine. The P protein binds the alpha-amino group of glycine through its pyridoxal phosphate cofactor; CO(2) is released and the remaining methylamine moiety is then transferred to the lipoamide cofactor of the H protein. The protein is Glycine dehydrogenase (decarboxylating) of Saccharophagus degradans (strain 2-40 / ATCC 43961 / DSM 17024).